Consider the following 533-residue polypeptide: DELLA protein GAI (533 aa).

Residues 1–12 are compositionally biased toward basic residues; sequence MKRDHHHHHHQD. A disordered region spans residues 1–24; the sequence is MKRDHHHHHHQDKKTMMMNEEDDG. The DELLA motif motif lies at 28-32; it reads DELLA. The LEXLE motif motif lies at 50 to 54; the sequence is LEQLE. The VHYNP motif signature appears at 73 to 77; it reads VHYNP. The GRAS domain maps to 160–529; that stretch reads VDSQENGVRL…RPLIATSAWK (370 aa). Residues 167-221 are leucine repeat I (LRI); sequence VRLVHALLACAEAVQKENLTVAEALVKQIGFLAVSQIGAMRKVATYFAEALARRI. Positions 174 to 178 match the LxCxE motif motif; it reads LACAE. The tract at residues 240-305 is VHIID; the sequence is QMHFYETCPY…GGPPVFRLTG (66 aa). A VHIID motif is present at residues 271–275; the sequence is VHVID. The segment at 319-351 is leucine repeat II (LRII); it reads EVGCKLAHLAEAIHVEFEYRGFVANTLADLDAS. The segment at 363–450 is PFYRE; that stretch reads VAVNSVFELH…EVYLGKQICN (88 aa). The short motif at 371–375 is the LXXLL motif element; sequence LHKLL. The interval 453 to 529 is SAW; that stretch reads ACDGPDRVER…RPLIATSAWK (77 aa).

This sequence belongs to the GRAS family. DELLA subfamily. In terms of assembly, interacts directly with the GID2/SLY1 component of the SCF(GID2) complex. Interacts (via N-terminus) with GID1A, GID1B and GID1B (via N-terminus). Interacts with the BOI proteins BOI, BRG1, BRG2, BRG3 and NUP58. Interacts with TOPP4. Interacts with TCP14 and TCP15. Interacts with FLZ5. Binds to and coactivates GAF1/IDD2 and ENY/IDD1 at the promoter of GA20OX2 gene. Binds to PDF2 and ATML1. Interacts with the prefoldin alpha subunits PFD3 and PFD5 in the nucleus. Phosphorylated. Post-translationally, gibberellin (GA) induces dephosphorylation of GAI by TOPP4 and subsequent degradation by the proteasomal pathway. In terms of processing, may be ubiquitinated, as suggested by its interaction with GID2. Ubiquitination is however unsure since in contrast to other DELLA proteins, it is not ubiquitinated and degraded upon GA application. Nevertheless, ubiquitination may be triggered by other processes. As to expression, ubiquitously expressed. Expressed in rosette leaves, roots, stems and inflorescences of greenhouse grown.

It localises to the nucleus. Its activity is regulated as follows. Transcription activation is repressed by gibberellic acid GA(3) in the presence of TPR4. Transcriptional regulator that acts as a repressor of the gibberellin (GA) signaling pathway. Transcription coactivator of the zinc finger transcription factors GAF1/IDD2 and ENY/IDD1 in regulation of gibberellin homeostasis and signaling. No effect of the BOI proteins on its stability. Probably acts by participating in large multiprotein complexes that repress transcription of GA-inducible genes. Positively regulates XERICO expression. In contrast to RGA, it is less sensitive to GA. Its activity is probably regulated by other phytohormones such as auxin and ethylene. Involved in the regulation of seed dormancy and germination, including glucose-induced delay of seed germination. Involved in the process leading to microtubules (MTs) dissociation in response to gibberellic acid (GA) probably by mediating the translocation of the prefoldin co-chaperone complex from the cytoplasm to the nucleus. The protein is DELLA protein GAI of Arabidopsis thaliana (Mouse-ear cress).